We begin with the raw amino-acid sequence, 168 residues long: Ribosome maturation factor RimP (168 aa).

This sequence belongs to the RimP family.

Its subcellular location is the cytoplasm. Functionally, required for maturation of 30S ribosomal subunits. The sequence is that of Ribosome maturation factor RimP from Bordetella parapertussis (strain 12822 / ATCC BAA-587 / NCTC 13253).